We begin with the raw amino-acid sequence, 289 residues long: MKLCGFEAGLDKPFFLIAGPCVIESEQMALDTAGELKAITAELGIPFIYKSSFDKANRSSGKSFRGLGMEKGLEILATVKREIGVPVLTDIHEIDEIKPVAAVVDVLQTPAFLCRQTDFIRACAQSGKPVNIKKGQFLAPHDMKNVIDKARDAAREAGLPDDVFMACERGVSFGYNNLVSDMRSLAIMRETGAPVVFDATHSVQLPGGQGTSSGGQREFVPVLSRAAVATGVAGLFMETHPDPSKAMSDGPNAVPLSRMKELLAVLKELDTLVKRAGFLEDNFGWPACA.

This sequence belongs to the KdsA family.

The protein resides in the cytoplasm. The enzyme catalyses D-arabinose 5-phosphate + phosphoenolpyruvate + H2O = 3-deoxy-alpha-D-manno-2-octulosonate-8-phosphate + phosphate. Its pathway is carbohydrate biosynthesis; 3-deoxy-D-manno-octulosonate biosynthesis; 3-deoxy-D-manno-octulosonate from D-ribulose 5-phosphate: step 2/3. It functions in the pathway bacterial outer membrane biogenesis; lipopolysaccharide biosynthesis. This chain is 2-dehydro-3-deoxyphosphooctonate aldolase, found in Cupriavidus necator (strain ATCC 17699 / DSM 428 / KCTC 22496 / NCIMB 10442 / H16 / Stanier 337) (Ralstonia eutropha).